Reading from the N-terminus, the 312-residue chain is uncharacterized protein (312 aa).

Catalysis depends on charge relay system residues serine 200, aspartate 261, and histidine 292.

Belongs to the AB hydrolase superfamily. AB hydrolase 2 family.

This is an uncharacterized protein from Acanthamoeba polyphaga mimivirus (APMV).